The sequence spans 470 residues: Cell division protein FtsP (470 aa).

Residues 1 to 27 (MSLSRRQFIQASGIALCAGAVPLKASA) constitute a signal peptide (tat-type signal). The 59-residue stretch at 229 to 287 (VRLRLLNASNSRRYQLQMSDGRPLHVISGDQGFLPAPVSVKQLSLAPGERREILVDMSN) folds into the Plastocyanin-like domain.

It belongs to the FtsP family. Post-translationally, predicted to be exported by the Tat system. The position of the signal peptide cleavage has not been experimentally proven.

It localises to the periplasm. In terms of biological role, cell division protein that is required for growth during stress conditions. May be involved in protecting or stabilizing the divisomal assembly under conditions of stress. This is Cell division protein FtsP from Shigella dysenteriae serotype 1 (strain Sd197).